We begin with the raw amino-acid sequence, 396 residues long: Jacalin-related lectin 45 (396 aa).

Jacalin-type lectin domains follow at residues Lys3–His138, Gln144–Val264, and Val270–Pro392.

It belongs to the jacalin lectin family.

In Arabidopsis thaliana (Mouse-ear cress), this protein is Jacalin-related lectin 45 (JAL45).